Reading from the N-terminus, the 137-residue chain is Small ribosomal subunit protein uS12 (137 aa).

2 disordered regions span residues 1–21 and 36–57; these read MPTI…KSDS and TKLS…TPKK. The residue at position 102 (D102) is a 3-methylthioaspartic acid.

Belongs to the universal ribosomal protein uS12 family. In terms of assembly, part of the 30S ribosomal subunit. Contacts proteins S8 and S17. May interact with IF1 in the 30S initiation complex.

With S4 and S5 plays an important role in translational accuracy. In terms of biological role, interacts with and stabilizes bases of the 16S rRNA that are involved in tRNA selection in the A site and with the mRNA backbone. Located at the interface of the 30S and 50S subunits, it traverses the body of the 30S subunit contacting proteins on the other side and probably holding the rRNA structure together. The combined cluster of proteins S8, S12 and S17 appears to hold together the shoulder and platform of the 30S subunit. This is Small ribosomal subunit protein uS12 from Streptococcus agalactiae serotype Ia (strain ATCC 27591 / A909 / CDC SS700).